The chain runs to 225 residues: NAD(P)H-quinone oxidoreductase subunit K, chloroplastic (225 aa).

[4Fe-4S] cluster-binding residues include cysteine 43, cysteine 44, cysteine 108, and cysteine 139.

This sequence belongs to the complex I 20 kDa subunit family. NDH is composed of at least 16 different subunits, 5 of which are encoded in the nucleus. Requires [4Fe-4S] cluster as cofactor.

The protein resides in the plastid. It is found in the chloroplast thylakoid membrane. It catalyses the reaction a plastoquinone + NADH + (n+1) H(+)(in) = a plastoquinol + NAD(+) + n H(+)(out). The enzyme catalyses a plastoquinone + NADPH + (n+1) H(+)(in) = a plastoquinol + NADP(+) + n H(+)(out). NDH shuttles electrons from NAD(P)H:plastoquinone, via FMN and iron-sulfur (Fe-S) centers, to quinones in the photosynthetic chain and possibly in a chloroplast respiratory chain. The immediate electron acceptor for the enzyme in this species is believed to be plastoquinone. Couples the redox reaction to proton translocation, and thus conserves the redox energy in a proton gradient. The chain is NAD(P)H-quinone oxidoreductase subunit K, chloroplastic from Barbarea verna (Land cress).